A 164-amino-acid polypeptide reads, in one-letter code: E3 ubiquitin ligase complex SCF subunit sconC (164 aa).

Positions 106 to 164 (ILAANYLDIKALLDVGCKTVANMIKGKSPEEIRKTFNIQNDFTPEEEDQIRRENEWAEE) are interaction with the F-box domain of F-box proteins.

This sequence belongs to the SKP1 family. As to quaternary structure, component of the SCF (SKP1-CUL1-F-box protein) E3 ubiquitin ligase complexes.

Its pathway is protein modification; protein ubiquitination. In terms of biological role, essential component of the SCF (SKP1-CUL1-F-box protein) E3 ubiquitin ligase complexes, which mediate the ubiquitination and subsequent proteasomal degradation of target proteins. Controls sulfur metabolite repression, probably by mediating the inactivation or degradation of the metR transcription factor. The protein is E3 ubiquitin ligase complex SCF subunit sconC (sconC) of Arthroderma benhamiae (strain ATCC MYA-4681 / CBS 112371) (Trichophyton mentagrophytes).